A 400-amino-acid polypeptide reads, in one-letter code: Exodeoxyribonuclease 7 large subunit (400 aa).

This sequence belongs to the XseA family. As to quaternary structure, heterooligomer composed of large and small subunits.

It is found in the cytoplasm. It carries out the reaction Exonucleolytic cleavage in either 5'- to 3'- or 3'- to 5'-direction to yield nucleoside 5'-phosphates.. Bidirectionally degrades single-stranded DNA into large acid-insoluble oligonucleotides, which are then degraded further into small acid-soluble oligonucleotides. This chain is Exodeoxyribonuclease 7 large subunit, found in Clostridium kluyveri (strain NBRC 12016).